The sequence spans 54 residues: Large ribosomal subunit protein eL37 (54 aa).

Zn(2+)-binding residues include Cys20, Cys23, Cys35, and Cys38. The segment at 20–38 adopts a C4-type zinc-finger fold; that stretch reads CRRCGHHTYNVRTKRCSHC.

Belongs to the eukaryotic ribosomal protein eL37 family. Zn(2+) is required as a cofactor.

Its function is as follows. Binds to the 23S rRNA. The protein is Large ribosomal subunit protein eL37 (rpl37e) of Thermoplasma volcanium (strain ATCC 51530 / DSM 4299 / JCM 9571 / NBRC 15438 / GSS1).